The chain runs to 468 residues: ATP synthase subunit beta (468 aa).

155–162 (GGAGVGKT) serves as a coordination point for ATP.

The protein belongs to the ATPase alpha/beta chains family. In terms of assembly, F-type ATPases have 2 components, CF(1) - the catalytic core - and CF(0) - the membrane proton channel. CF(1) has five subunits: alpha(3), beta(3), gamma(1), delta(1), epsilon(1). CF(0) has three main subunits: a(1), b(2) and c(9-12). The alpha and beta chains form an alternating ring which encloses part of the gamma chain. CF(1) is attached to CF(0) by a central stalk formed by the gamma and epsilon chains, while a peripheral stalk is formed by the delta and b chains.

The protein resides in the cell inner membrane. It catalyses the reaction ATP + H2O + 4 H(+)(in) = ADP + phosphate + 5 H(+)(out). Functionally, produces ATP from ADP in the presence of a proton gradient across the membrane. The catalytic sites are hosted primarily by the beta subunits. This is ATP synthase subunit beta from Thermotoga petrophila (strain ATCC BAA-488 / DSM 13995 / JCM 10881 / RKU-1).